A 457-amino-acid chain; its full sequence is tRNA-2-methylthio-N(6)-dimethylallyladenosine synthase (457 aa).

The 116-residue stretch at 19–134 (RKLFIETYGC…LPNLVGAVEH (116 aa)) folds into the MTTase N-terminal domain. [4Fe-4S] cluster-binding residues include Cys28, Cys64, Cys98, Cys172, Cys176, and Cys179. The 233-residue stretch at 158–390 (PGVHISGFVS…IDLQNKLSEE (233 aa)) folds into the Radical SAM core domain. Residues 393–456 (LRDIGKTFEV…SATLFGEPVE (64 aa)) form the TRAM domain.

The protein belongs to the methylthiotransferase family. MiaB subfamily. Monomer. The cofactor is [4Fe-4S] cluster.

The protein resides in the cytoplasm. It carries out the reaction N(6)-dimethylallyladenosine(37) in tRNA + (sulfur carrier)-SH + AH2 + 2 S-adenosyl-L-methionine = 2-methylsulfanyl-N(6)-dimethylallyladenosine(37) in tRNA + (sulfur carrier)-H + 5'-deoxyadenosine + L-methionine + A + S-adenosyl-L-homocysteine + 2 H(+). Catalyzes the methylthiolation of N6-(dimethylallyl)adenosine (i(6)A), leading to the formation of 2-methylthio-N6-(dimethylallyl)adenosine (ms(2)i(6)A) at position 37 in tRNAs that read codons beginning with uridine. In Parabacteroides distasonis (strain ATCC 8503 / DSM 20701 / CIP 104284 / JCM 5825 / NCTC 11152), this protein is tRNA-2-methylthio-N(6)-dimethylallyladenosine synthase.